The chain runs to 415 residues: Krueppel-like factor 15 (415 aa).

The short motif at 75–83 is the 9aaTAD element; sequence SILDFLLSR. Residues 172–216 form a disordered region; that stretch reads LSAGSHRSHLHPESAGRERCTPPPGGTSGGGAQSAGEGPAHDGPV. A compositionally biased stretch (basic and acidic residues) spans 181 to 191; the sequence is LHPESAGRERC. 3 C2H2-type zinc fingers span residues 320–344, 350–374, and 380–402; these read HKCT…LRRH, FACT…RRSH, and YQCP…IKVH.

This sequence belongs to the Sp1 C2H2-type zinc-finger protein family. Interacts with MYOCD. Interacts with EP300. As to expression, expressed in aortic smooth muscle cells.

The protein localises to the nucleus. Its function is as follows. Transcriptional regulator that binds to the GA element of the CLCNKA promoter. Binds to the KCNIP2 promoter and regulates KCNIP2 circadian expression in the heart. Is a repressor of CCN2 expression, involved in the control of cardiac fibrosis. Is also involved in the control of cardiac hypertrophy acting through the inhibition of MEF2A, GATA4 and MYOCD activity. Is a negative regulator of TP53 acetylation. Inhibits NF-kappa-B activation through repression of EP300-dependent RELA acetylation. Involved in podocyte differentiation. The polypeptide is Krueppel-like factor 15 (Klf15) (Mus musculus (Mouse)).